A 107-amino-acid polypeptide reads, in one-letter code: High mobility group protein HMG-I/HMG-Y (107 aa).

The disordered stretch occupies residues 1-107 (MSESSSKSSQ…ISQESSEEEQ (107 aa)). Serine 2 bears the N-acetylserine mark. Lysine 7 is modified (N6-acetyllysine). Position 8 is an ADP-ribosylserine (serine 8). Serine 9 is subject to ADP-ribosylserine; alternate. Serine 9 carries the phosphoserine; alternate modification. Residue lysine 15 is modified to N6-acetyllysine; alternate. Residue lysine 15 forms a Glycyl lysine isopeptide (Lys-Gly) (interchain with G-Cter in SUMO2); alternate linkage. Residues 15-24 (KQEKDGTEKR) are compositionally biased toward basic and acidic residues. The a.T hook 1 DNA-binding region spans 21–31 (TEKRGRGRPRK). The residue at position 26 (arginine 26) is an Asymmetric dimethylarginine; alternate. An Omega-N-methylarginine; alternate modification is found at arginine 26. Arginine 26 bears the Symmetric dimethylarginine; alternate mark. Serine 36 carries the phosphoserine; by HIPK2 and CDC2 modification. Residues threonine 39 and valine 42 each carry the phosphothreonine modification. Phosphoserine occurs at positions 44 and 49. Threonine 53 carries the post-translational modification Phosphothreonine; by HIPK2 and CDC2. Residues 53–63 (TPKRPRGRPKG) constitute a DNA-binding region (a.T hook 2). The interaction with HIPK2 stretch occupies residues 53-77 (TPKRPRGRPKGSKNKGAAKTRKTTT). Residues 55-74 (KRPRGRPKGSKNKGAAKTRK) show a composition bias toward basic residues. Asymmetric dimethylarginine; by PRMT6; alternate is present on residues arginine 58 and arginine 60. Arginine 58 and arginine 60 each carry omega-N-methylarginine; by PRMT6; alternate. Lysine 67 is modified (phosphothreonine). A Phosphothreonine; by HIPK2 and CDC2 modification is found at threonine 78. A DNA-binding region (a.T hook 3) is located at residues 78-89 (TPGRKPRGRPKK). The span at 93 to 107 (EEEEGISQESSEEEQ) shows a compositional bias: acidic residues. Position 99 is a phosphoserine (serine 99). A phosphoserine; by CK mark is found at serine 102 and serine 103.

Belongs to the HMGA family. In terms of assembly, interacts with HIPK2. In terms of processing, constitutively phosphorylated on two or three sites. Hyperphosphorylated at early stages of apoptosis, followed by dephosphorylation and methylation, which coincides with chromatin condensation. Isoforms HMG-I and HMG-Y can be phosphorylated by HIPK2. Phosphorylation of HMG-I at Ser-36, Thr-53 and Thr-78 and of HMG-Y at Thr-42 and Thr-67 by HIPK2 modulates DNA-binding affinity. Post-translationally, HMG-Y is not methylated. Methylation at Arg-58 is mutually exclusive with methylation at Arg-60.

It localises to the nucleus. The protein localises to the chromosome. HMG-I/Y bind preferentially to the minor groove of A+T rich regions in double-stranded DNA. It is suggested that these proteins could function in nucleosome phasing and in the 3'-end processing of mRNA transcripts. They are also involved in the transcription regulation of genes containing, or in close proximity to A+T-rich regions. The sequence is that of High mobility group protein HMG-I/HMG-Y (HMGA1) from Homo sapiens (Human).